Here is a 666-residue protein sequence, read N- to C-terminus: Probable potassium transport system protein Kup (666 aa).

Helical transmembrane passes span 16 to 36 (GFII…LYTM), 58 to 78 (ISLI…LVAL), 99 to 119 (TPWL…DGAL), 141 to 161 (IFQN…LLFA), 167 to 187 (TGVI…FLGI), 221 to 241 (IFIL…YSDL), 253 to 273 (WPFV…WILA), 292 to 312 (FTMH…QALI), 343 to 363 (TYIP…VLLF), 373 to 393 (YGLA…FFLI), 402 to 422 (VLLM…ASAV), and 424 to 444 (FMHG…IMII).

It belongs to the HAK/KUP transporter (TC 2.A.72) family.

The protein resides in the cell membrane. The enzyme catalyses K(+)(in) + H(+)(in) = K(+)(out) + H(+)(out). Functionally, transport of potassium into the cell. Likely operates as a K(+):H(+) symporter. The chain is Probable potassium transport system protein Kup from Streptococcus agalactiae serotype III (strain NEM316).